We begin with the raw amino-acid sequence, 1356 residues long: Kinesin-like protein KIF24 (1356 aa).

The SAM domain maps to 1-64 (MASWLYECLC…FQLIKIIKIM (64 aa)). The interval 93–119 (GPRRQLHFDSPSASKDKMANNETGSLS) is disordered. Ser-102 bears the Phosphoserine mark. A Kinesin motor domain is found at 218-541 (KIRVCVRKRP…LRYADRVKEL (324 aa)). 308 to 315 (GQTGAGKT) contacts ATP. At Ser-473 the chain carries Phosphoserine. Residues 473-702 (SLLALKECIR…PTRGKKVQPV (230 aa)) are interaction with MPHOSPH9. The span at 552 to 571 (TSQNQTSANASPKRIQSSPV) shows a compositional bias: polar residues. Disordered stretches follow at residues 552 to 581 (TSQN…CSPK), 597 to 664 (PTKV…LCSE), 788 to 840 (EGRL…STAL), 897 to 947 (RGAL…HQKP), and 964 to 998 (VPEQ…DQRD). Ser-579 is subject to Phosphoserine. Thr-615 bears the Phosphothreonine; by NEK2 mark. A Phosphoserine; by NEK2 modification is found at Ser-616. A phosphoserine mark is found at Ser-640, Ser-817, and Ser-820. The segment covering 640–653 (SPRKGTTRSGHSIK) has biased composition (basic residues). Positions 810–821 (QAEDLDDSDFSE) are enriched in acidic residues. Residues 830–840 (QPAMKQGSTAL) are compositionally biased toward polar residues. A compositionally biased stretch (polar residues) spans 970 to 979 (GSLSSPSPEN). Ser-1008 is subject to Phosphoserine. Positions 1109–1140 (LSSSPPDNRPSGDLPALSPSPIHQHSPDKLPG) are disordered.

It belongs to the TRAFAC class myosin-kinesin ATPase superfamily. Kinesin family. Interacts with CCP110, CEP97, TALPID3. Interacts with MPHOSPH9. Expressed in brain, spinal cord, and small intestine.

The protein localises to the cytoplasm. Its subcellular location is the cytoskeleton. It is found in the microtubule organizing center. It localises to the centrosome. The protein resides in the centriole. Functionally, microtubule-dependent motor protein that acts as a negative regulator of ciliogenesis by mediating recruitment of CCP110 to mother centriole in cycling cells, leading to restrict nucleation of cilia at centrioles. Mediates depolymerization of microtubules of centriolar origin, possibly to suppress aberrant cilia formation. Following activation by NEK2 involved in disassembly of primary cilium during G2/M phase but does not disassemble fully formed ciliary axonemes. As cilium assembly and disassembly is proposed to coexist in a dynamic equilibrium may suppress nascent cilium assembly and, potentially, ciliar re-assembly in cells that have already disassembled their cilia ensuring the completion of cilium removal in the later stages of the cell cycle. Plays an important role in recruiting MPHOSPH9, a negative regulator of cilia formation to the distal end of mother centriole. This is Kinesin-like protein KIF24 (Kif24) from Mus musculus (Mouse).